The sequence spans 620 residues: Dihydroxy-acid dehydratase (620 aa).

Aspartate 81 is a Mg(2+) binding site. Residue cysteine 122 coordinates [2Fe-2S] cluster. Residues aspartate 123 and lysine 124 each coordinate Mg(2+). Lysine 124 is subject to N6-carboxylysine. Residue cysteine 195 coordinates [2Fe-2S] cluster. Mg(2+) is bound at residue glutamate 491. The active-site Proton acceptor is the serine 517.

This sequence belongs to the IlvD/Edd family. Homodimer. It depends on [2Fe-2S] cluster as a cofactor. Requires Mg(2+) as cofactor.

It catalyses the reaction (2R)-2,3-dihydroxy-3-methylbutanoate = 3-methyl-2-oxobutanoate + H2O. It carries out the reaction (2R,3R)-2,3-dihydroxy-3-methylpentanoate = (S)-3-methyl-2-oxopentanoate + H2O. The protein operates within amino-acid biosynthesis; L-isoleucine biosynthesis; L-isoleucine from 2-oxobutanoate: step 3/4. Its pathway is amino-acid biosynthesis; L-valine biosynthesis; L-valine from pyruvate: step 3/4. Its function is as follows. Functions in the biosynthesis of branched-chain amino acids. Catalyzes the dehydration of (2R,3R)-2,3-dihydroxy-3-methylpentanoate (2,3-dihydroxy-3-methylvalerate) into 2-oxo-3-methylpentanoate (2-oxo-3-methylvalerate) and of (2R)-2,3-dihydroxy-3-methylbutanoate (2,3-dihydroxyisovalerate) into 2-oxo-3-methylbutanoate (2-oxoisovalerate), the penultimate precursor to L-isoleucine and L-valine, respectively. This is Dihydroxy-acid dehydratase from Colwellia psychrerythraea (strain 34H / ATCC BAA-681) (Vibrio psychroerythus).